A 151-amino-acid chain; its full sequence is Deoxyuridine 5'-triphosphate nucleotidohydrolase (151 aa).

Substrate-binding positions include 70–72, asparagine 83, 87–89, and methionine 97; these read RSG and LID.

The protein belongs to the dUTPase family. Requires Mg(2+) as cofactor.

The catalysed reaction is dUTP + H2O = dUMP + diphosphate + H(+). The protein operates within pyrimidine metabolism; dUMP biosynthesis; dUMP from dCTP (dUTP route): step 2/2. This enzyme is involved in nucleotide metabolism: it produces dUMP, the immediate precursor of thymidine nucleotides and it decreases the intracellular concentration of dUTP so that uracil cannot be incorporated into DNA. This Mannheimia succiniciproducens (strain KCTC 0769BP / MBEL55E) protein is Deoxyuridine 5'-triphosphate nucleotidohydrolase.